We begin with the raw amino-acid sequence, 430 residues long: Probable histidine--tRNA ligase, cytoplasmic (430 aa).

Belongs to the class-II aminoacyl-tRNA synthetase family.

It localises to the cytoplasm. The enzyme catalyses tRNA(His) + L-histidine + ATP = L-histidyl-tRNA(His) + AMP + diphosphate + H(+). This Vairimorpha ceranae (strain BRL01) (Microsporidian parasite) protein is Probable histidine--tRNA ligase, cytoplasmic.